The primary structure comprises 601 residues: Elongation factor 4 (601 aa).

Positions 7 to 189 constitute a tr-type G domain; that stretch reads KHTRNFSIVA…AIVEKVPVPD (183 aa). GTP-binding positions include 19–24 and 136–139; these read DHGKST and NKID.

This sequence belongs to the TRAFAC class translation factor GTPase superfamily. Classic translation factor GTPase family. LepA subfamily.

Its subcellular location is the cell membrane. It catalyses the reaction GTP + H2O = GDP + phosphate + H(+). In terms of biological role, required for accurate and efficient protein synthesis under certain stress conditions. May act as a fidelity factor of the translation reaction, by catalyzing a one-codon backward translocation of tRNAs on improperly translocated ribosomes. Back-translocation proceeds from a post-translocation (POST) complex to a pre-translocation (PRE) complex, thus giving elongation factor G a second chance to translocate the tRNAs correctly. Binds to ribosomes in a GTP-dependent manner. This chain is Elongation factor 4, found in Clostridium novyi (strain NT).